A 564-amino-acid polypeptide reads, in one-letter code: Probable diguanylate cyclase DgcQ (564 aa).

2 helical membrane-spanning segments follow: residues 20-40 and 360-380; these read LGPG…STLL and IALT…WYVI. The GGDEF domain maps to 428 to 563; sequence HPFSVIQVDL…GRNRVFASDN (136 aa). Position 436 (Asp436) interacts with Mg(2+). Substrate-binding residues include Asn444, His449, and Asp453. Glu479 is a Mg(2+) binding site. Catalysis depends on Glu479, which acts as the Proton acceptor.

Homodimer. The cofactor is Mg(2+).

It is found in the cell inner membrane. The enzyme catalyses 2 GTP = 3',3'-c-di-GMP + 2 diphosphate. It participates in glycan metabolism; bacterial cellulose biosynthesis. It functions in the pathway purine metabolism; 3',5'-cyclic di-GMP biosynthesis. Catalyzes the synthesis of cyclic-di-GMP (c-di-GMP) via the condensation of 2 GTP molecules. Cyclic-di-GMP is a second messenger which controls cell surface-associated traits in bacteria. Involved in the regulation of cellulose production. The protein is Probable diguanylate cyclase DgcQ of Escherichia coli O157:H7.